The chain runs to 610 residues: DNA mismatch repair protein MutL (610 aa).

Belongs to the DNA mismatch repair MutL/HexB family.

Functionally, this protein is involved in the repair of mismatches in DNA. It is required for dam-dependent methyl-directed DNA mismatch repair. May act as a 'molecular matchmaker', a protein that promotes the formation of a stable complex between two or more DNA-binding proteins in an ATP-dependent manner without itself being part of a final effector complex. The sequence is that of DNA mismatch repair protein MutL from Rickettsia rickettsii (strain Iowa).